The primary structure comprises 76 residues: Large ribosomal subunit protein eL38 (76 aa).

The protein belongs to the eukaryotic ribosomal protein eL38 family.

This chain is Large ribosomal subunit protein eL38 (RpL38), found in Lysiphlebus testaceipes (Greenbugs aphid parastoid).